The following is a 208-amino-acid chain: Troponin I, cardiac muscle (208 aa).

Disordered regions lie at residues 1-37 (MAEEEEPKPPPLRRKSSANYRGYAVEPHAKRQSKISA), 54-74 (DLEREEQERAGEKQRHLGELC), and 168-208 (VRKD…GGQS). Residue alanine 2 is modified to N-acetylalanine. Positions 28 to 73 (HAKRQSKISASRKLQLKTLLLQRAKRDLEREEQERAGEKQRHLGEL) are involved in binding TNC. 2 stretches are compositionally biased toward basic and acidic residues: residues 54–71 (DLEREEQERAGEKQRHLG) and 168–187 (VRKDEAEKESREVGDWRKNV).

Belongs to the troponin I family. In terms of assembly, binds to actin and tropomyosin.

In terms of biological role, troponin I is the inhibitory subunit of troponin, the thin filament regulatory complex which confers calcium-sensitivity to striated muscle actomyosin ATPase activity. The sequence is that of Troponin I, cardiac muscle (TNNI3) from Coturnix japonica (Japanese quail).